Here is a 56-residue protein sequence, read N- to C-terminus: Large ribosomal subunit protein bL33 (56 aa).

Positions 1–12 (MATKGGRDKIKL) are enriched in basic and acidic residues. Residues 1-24 (MATKGGRDKIKLESTAGTGHFYTT) are disordered. Residues 15 to 24 (TAGTGHFYTT) are compositionally biased toward polar residues.

Belongs to the bacterial ribosomal protein bL33 family.

This Paracidovorax citrulli (strain AAC00-1) (Acidovorax citrulli) protein is Large ribosomal subunit protein bL33.